The primary structure comprises 245 residues: Probable septum site-determining protein MinC (245 aa).

The segment covering 112 to 132 (ARERPLESAEPVAPKKPEKPP) has biased composition (basic and acidic residues). The tract at residues 112-140 (ARERPLESAEPVAPKKPEKPPEPTVKPTR) is disordered.

This sequence belongs to the MinC family. Interacts with MinD and FtsZ.

Functionally, cell division inhibitor that blocks the formation of polar Z ring septums. Rapidly oscillates between the poles of the cell to destabilize FtsZ filaments that have formed before they mature into polar Z rings. Prevents FtsZ polymerization. The sequence is that of Probable septum site-determining protein MinC from Pseudomonas fluorescens (strain Pf0-1).